Consider the following 79-residue polypeptide: Large ribosomal subunit protein uL24 (79 aa).

The protein belongs to the universal ribosomal protein uL24 family. Part of the 50S ribosomal subunit.

Functionally, one of two assembly initiator proteins, it binds directly to the 5'-end of the 23S rRNA, where it nucleates assembly of the 50S subunit. In terms of biological role, one of the proteins that surrounds the polypeptide exit tunnel on the outside of the subunit. This Lactobacillus delbrueckii subsp. bulgaricus (strain ATCC 11842 / DSM 20081 / BCRC 10696 / JCM 1002 / NBRC 13953 / NCIMB 11778 / NCTC 12712 / WDCM 00102 / Lb 14) protein is Large ribosomal subunit protein uL24.